Consider the following 162-residue polypeptide: Ribosomal RNA large subunit methyltransferase H (162 aa).

Gly108 is an S-adenosyl-L-methionine binding site.

The protein belongs to the RNA methyltransferase RlmH family. Homodimer.

The protein localises to the cytoplasm. It catalyses the reaction pseudouridine(1915) in 23S rRNA + S-adenosyl-L-methionine = N(3)-methylpseudouridine(1915) in 23S rRNA + S-adenosyl-L-homocysteine + H(+). In terms of biological role, specifically methylates the pseudouridine at position 1915 (m3Psi1915) in 23S rRNA. The protein is Ribosomal RNA large subunit methyltransferase H of Methylobacterium sp. (strain 4-46).